A 396-amino-acid polypeptide reads, in one-letter code: MLDAQTIATVKATIPLLVETGPKLTAHFYDRMFTHNPELKEIFNMSNQRNGDQREALFNAIAAYASNIENLPALLPAVEKIAQKHTSFQIKPEQYNIVGTHLLATLDEMFNPGQEVLDAWGKAYGVLANVFIHREAEIYHENASKDGGWEGTRPFRIVAKTPRSALITSFEFEPVDGGTVAEYRPGQYLGVWLKPEGFAHQEIRQYSLTRKPDGKGYRIAVKREDGGQVSNWLHHHASVGDGVHLAAPAGDFFMNVAADTPVSLISAGVGQTPMLAMLDTLAKEQHTAQVNWFHAAENGDVHAFADEVSELGRTLPRFTAHTWYREPTESDRAQRLFDSEGLMDLSKLEAAISDPAMQFYLCGPVGFMQFAAKQLVSLGVNNENIHYECFGPHKVL.

Residues 1–136 form the Globin domain; sequence MLDAQTIATV…LANVFIHREA (136 aa). His-85 contributes to the heme b binding site. Active-site charge relay system residues include Tyr-95 and Glu-135. The interval 147–396 is reductase; that stretch reads GGWEGTRPFR…YECFGPHKVL (250 aa). An FAD-binding FR-type domain is found at 150-255; it reads EGTRPFRIVA…AAPAGDFFMN (106 aa). FAD is bound by residues Tyr-188 and 204–207; that span reads RQYS. Position 268 to 273 (268 to 273) interacts with NADP(+); that stretch reads GVGQTP. An FAD-binding site is contributed by 389–392; it reads CFGP.

This sequence belongs to the globin family. Two-domain flavohemoproteins subfamily. The protein in the C-terminal section; belongs to the flavoprotein pyridine nucleotide cytochrome reductase family. Monomer. Heme b serves as cofactor. It depends on FAD as a cofactor.

It carries out the reaction 2 nitric oxide + NADPH + 2 O2 = 2 nitrate + NADP(+) + H(+). The enzyme catalyses 2 nitric oxide + NADH + 2 O2 = 2 nitrate + NAD(+) + H(+). In terms of biological role, is involved in NO detoxification in an aerobic process, termed nitric oxide dioxygenase (NOD) reaction that utilizes O(2) and NAD(P)H to convert NO to nitrate, which protects the bacterium from various noxious nitrogen compounds. Therefore, plays a central role in the inducible response to nitrosative stress. The chain is Flavohemoprotein (hmp) from Salmonella typhimurium (strain LT2 / SGSC1412 / ATCC 700720).